A 98-amino-acid polypeptide reads, in one-letter code: Large ribosomal subunit protein eL21 (98 aa).

The protein belongs to the eukaryotic ribosomal protein eL21 family.

The sequence is that of Large ribosomal subunit protein eL21 from Korarchaeum cryptofilum (strain OPF8).